The sequence spans 782 residues: Translation initiation factor IF-2 (782 aa).

The segment at 47–196 (DNAIDGTNKK…TPPKPKELPE (150 aa)) is disordered. Residues 53-65 (TNKKAEAPKKETT) show a composition bias toward basic and acidic residues. Positions 66–81 (SNENGNSKGPNKPNMT) are enriched in polar residues. Low complexity-rich tracts occupy residues 82–93 (NSNEKSNKPNNP) and 118–170 (NTSK…NNKG). The region spanning 283–452 (ERPPVVTIMG…LLVSEVEELK (170 aa)) is the tr-type G domain. Residues 292–299 (GHVDHGKT) are G1. 292 to 299 (GHVDHGKT) contributes to the GTP binding site. Positions 317–321 (GITQH) are G2. Residues 338 to 341 (DTPG) are G3. Residues 338–342 (DTPGH) and 392–395 (NKID) contribute to the GTP site. The G4 stretch occupies residues 392–395 (NKID). Residues 428-430 (SAK) form a G5 region.

The protein belongs to the TRAFAC class translation factor GTPase superfamily. Classic translation factor GTPase family. IF-2 subfamily.

It is found in the cytoplasm. In terms of biological role, one of the essential components for the initiation of protein synthesis. Protects formylmethionyl-tRNA from spontaneous hydrolysis and promotes its binding to the 30S ribosomal subunits. Also involved in the hydrolysis of GTP during the formation of the 70S ribosomal complex. This Listeria monocytogenes serotype 4b (strain CLIP80459) protein is Translation initiation factor IF-2.